A 317-amino-acid polypeptide reads, in one-letter code: Osteopontin (317 aa).

The N-terminal stretch at 1-16 (MRLAVVCFCLFGLASC) is a signal peptide. Phosphoserine is present on residues Ser26, Ser27, Ser60, Ser62, and Ser63. A disordered region spans residues 43–297 (WLKPDPSQKQ…LVLDPKSKED (255 aa)). Positions 49-63 (SQKQNLLAPQNSVSS) are enriched in polar residues. Position 66 is a phosphothreonine (Thr66). Phosphoserine occurs at positions 76, 78, 81, 106, 109, 112, 115, and 118. Acidic residues predominate over residues 86-110 (DDDDDDDDDGDHAESEDSVNSDESD). Residues Thr123, Thr132, and Thr137 are each glycosylated (O-linked (GalNAc...) threonine). Residues 144-146 (RGD) carry the Cell attachment site motif. Phosphothreonine occurs at positions 170 and 175. Basic and acidic residues predominate over residues 174–187 (LTSRMKSQESDEAI). Ser176, Ser180, Ser200, Ser204, Ser209, Ser213, and Ser219 each carry phosphoserine. The span at 197-216 (SVPSDQDSNGKTSHESSQLD) shows a compositional bias: polar residues. Ser219 is a glycosylation site (O-linked (Xyl...) (chondroitin sulfate) serine). At Thr222 the chain carries Phosphothreonine. 2 stretches are compositionally biased toward basic and acidic residues: residues 223–240 (HSLE…HEST) and 248–263 (SAEK…RSDA). 14 positions are modified to phosphoserine: Ser224, Ser228, Ser257, Ser261, Ser266, Ser270, Ser273, Ser278, Ser283, Ser294, Ser306, Ser311, Ser313, and Ser314. Positions 273–297 (SLEHQSHEFHSHEDKLVLDPKSKED) are enriched in basic and acidic residues. Ser311 is a glycosylation site (O-linked (Xyl...) (chondroitin sulfate) serine).

It belongs to the osteopontin family. As to quaternary structure, interacts (via N-terminus) with integrin ITGA9:ITGB1. In terms of processing, extensively phosphorylated by FAM20C in the extracellular medium at multiple sites within the S-x-E/pS motif. The phosphorylated form inhibits hydroxyapatite crystallization. Dephosphorylation via a mechanism involving ALPL/TNAP promotes hydroxyapatite crystallization. Post-translationally, O-glycosylated. Forms covalent cross-links mediated by transglutaminase TGM2, between a glutamine and the epsilon-amino group of a lysine residue, forming homopolymers and heteropolymers, increasing its collagen binding properties.

The protein localises to the secreted. In terms of biological role, major non-collagenous bone protein that binds tightly to hydroxyapatite. Appears to form an integral part of the mineralized matrix. Probably important to cell-matrix interaction. Its function is as follows. Acts as a cytokine involved in enhancing production of interferon-gamma and interleukin-12 and reducing production of interleukin-10 and is essential in the pathway that leads to type I immunity. The sequence is that of Osteopontin (Spp1) from Rattus norvegicus (Rat).